A 484-amino-acid chain; its full sequence is Aspartyl/glutamyl-tRNA(Asn/Gln) amidotransferase subunit B (484 aa).

The protein belongs to the GatB/GatE family. GatB subfamily. As to quaternary structure, heterotrimer of A, B and C subunits.

It catalyses the reaction L-glutamyl-tRNA(Gln) + L-glutamine + ATP + H2O = L-glutaminyl-tRNA(Gln) + L-glutamate + ADP + phosphate + H(+). The catalysed reaction is L-aspartyl-tRNA(Asn) + L-glutamine + ATP + H2O = L-asparaginyl-tRNA(Asn) + L-glutamate + ADP + phosphate + 2 H(+). Its function is as follows. Allows the formation of correctly charged Asn-tRNA(Asn) or Gln-tRNA(Gln) through the transamidation of misacylated Asp-tRNA(Asn) or Glu-tRNA(Gln) in organisms which lack either or both of asparaginyl-tRNA or glutaminyl-tRNA synthetases. The reaction takes place in the presence of glutamine and ATP through an activated phospho-Asp-tRNA(Asn) or phospho-Glu-tRNA(Gln). This is Aspartyl/glutamyl-tRNA(Asn/Gln) amidotransferase subunit B from Bordetella parapertussis (strain 12822 / ATCC BAA-587 / NCTC 13253).